Here is a 333-residue protein sequence, read N- to C-terminus: Adenosine deaminase (333 aa).

H12 and H14 together coordinate Zn(2+). Residues H14, D16, and G170 each coordinate substrate. H197 contacts Zn(2+). Residue E200 is the Proton donor of the active site. D278 is a Zn(2+) binding site. D279 lines the substrate pocket.

The protein belongs to the metallo-dependent hydrolases superfamily. Adenosine and AMP deaminases family. Adenosine deaminase subfamily. Zn(2+) serves as cofactor.

The enzyme catalyses adenosine + H2O + H(+) = inosine + NH4(+). The catalysed reaction is 2'-deoxyadenosine + H2O + H(+) = 2'-deoxyinosine + NH4(+). Functionally, catalyzes the hydrolytic deamination of adenosine and 2-deoxyadenosine. The protein is Adenosine deaminase of Salmonella dublin (strain CT_02021853).